We begin with the raw amino-acid sequence, 173 residues long: MKLSPGKNAPDVVNVLVEIPQGSNIKYEYDDEEGVIKVDRVLYTSMNYPFNYGFIPGTLEEDGDPLDVLVITNYQLYPGSVIEVRPIGILYMKDEEGEDAKIVAVPKDKTDPSFSNIKDINDLPQATKNKIVHFFEHYKELEPGKYVKISGWGSATEAKNRIQLAIKRVSGGQ.

Positions 26, 40, and 52 each coordinate substrate. 3 residues coordinate Mg(2+): Asp-62, Asp-67, and Asp-99. Residue Tyr-138 participates in substrate binding.

Belongs to the PPase family. As to quaternary structure, homohexamer. Mg(2+) is required as a cofactor.

The protein localises to the cytoplasm. It carries out the reaction diphosphate + H2O = 2 phosphate + H(+). Its function is as follows. Catalyzes the hydrolysis of inorganic pyrophosphate (PPi) forming two phosphate ions. The chain is Inorganic pyrophosphatase from Sulfolobus acidocaldarius (strain ATCC 33909 / DSM 639 / JCM 8929 / NBRC 15157 / NCIMB 11770).